A 182-amino-acid chain; its full sequence is ATP-dependent protease subunit HslV (182 aa).

T12 is an active-site residue. 3 residues coordinate Na(+): A167, C170, and T173.

Belongs to the peptidase T1B family. HslV subfamily. In terms of assembly, a double ring-shaped homohexamer of HslV is capped on each side by a ring-shaped HslU homohexamer. The assembly of the HslU/HslV complex is dependent on binding of ATP.

Its subcellular location is the cytoplasm. The enzyme catalyses ATP-dependent cleavage of peptide bonds with broad specificity.. With respect to regulation, allosterically activated by HslU binding. Protease subunit of a proteasome-like degradation complex believed to be a general protein degrading machinery. In Chlorobium limicola (strain DSM 245 / NBRC 103803 / 6330), this protein is ATP-dependent protease subunit HslV.